Reading from the N-terminus, the 91-residue chain is Small ribosomal subunit protein bS18 (91 aa).

This sequence belongs to the bacterial ribosomal protein bS18 family. Part of the 30S ribosomal subunit. Forms a tight heterodimer with protein bS6.

In terms of biological role, binds as a heterodimer with protein bS6 to the central domain of the 16S rRNA, where it helps stabilize the platform of the 30S subunit. The chain is Small ribosomal subunit protein bS18 from Gluconacetobacter diazotrophicus (strain ATCC 49037 / DSM 5601 / CCUG 37298 / CIP 103539 / LMG 7603 / PAl5).